The chain runs to 463 residues: Asparagine--tRNA ligase (463 aa).

Belongs to the class-II aminoacyl-tRNA synthetase family. In terms of assembly, homodimer.

It is found in the cytoplasm. It carries out the reaction tRNA(Asn) + L-asparagine + ATP = L-asparaginyl-tRNA(Asn) + AMP + diphosphate + H(+). In Clostridium tetani (strain Massachusetts / E88), this protein is Asparagine--tRNA ligase.